A 171-amino-acid chain; its full sequence is Der GTPase-activating protein YihI (171 aa).

Disordered stretches follow at residues 1 to 99 (MKKP…QAEL) and 145 to 171 (LSYD…RGGN). Residues 20–30 (TREELNQEARD) are compositionally biased toward basic and acidic residues. The segment covering 31–40 (RKRLKKHRGH) has biased composition (basic residues). The span at 147–160 (YDDDEEDDEEDEKQ) shows a compositional bias: acidic residues.

It belongs to the YihI family. As to quaternary structure, interacts with Der.

Its function is as follows. A GTPase-activating protein (GAP) that modifies Der/EngA GTPase function. May play a role in ribosome biogenesis. The chain is Der GTPase-activating protein YihI from Salmonella agona (strain SL483).